The following is a 386-amino-acid chain: Uroporphyrinogen decarboxylase (386 aa).

Positions 44, 46, 48, 57, 93, 170, 225, and 364 each coordinate coproporphyrinogen I. 3 residues coordinate coproporphyrinogen III: Arg44, Ala46, and Arg48. Positions 93, 170, 225, and 364 each coordinate coproporphyrinogen III.

The protein belongs to the uroporphyrinogen decarboxylase family. Homodimer.

The protein localises to the cytoplasm. It localises to the cytosol. The enzyme catalyses uroporphyrinogen III + 4 H(+) = coproporphyrinogen III + 4 CO2. It functions in the pathway porphyrin-containing compound metabolism; protoporphyrin-IX biosynthesis; coproporphyrinogen-III from 5-aminolevulinate: step 4/4. In terms of biological role, catalyzes the decarboxylation of four acetate groups of uroporphyrinogen-III to yield coproporphyrinogen-III. This chain is Uroporphyrinogen decarboxylase, found in Drosophila virilis (Fruit fly).